Reading from the N-terminus, the 244-residue chain is MTLDLDANKKDDKLLLTTIQQEYKILAEYKMIESEKLSGIYVIPSYANSLQWFGVFFGRQGFYTESVFRFTILLPDRFPDDKSLPTIIFQQDVIHPHVCPYTHGLDVSHAFPEWRCGEDHLWQLLKYLQTIFSDPLDSIRGIELDKLKDSEAAELLMTNKEEYVARVQKNIKESKEHIFDTPPTEDPHYIVFEKFQQDVHGPVLERIKAGRSKQTEPSAQQANGGHATGLSWVKEGEFKPLSIE.

Positions 20-176 (QQEYKILAEY…VQKNIKESKE (157 aa)) constitute a UBC core domain. The segment at 209-244 (AGRSKQTEPSAQQANGGHATGLSWVKEGEFKPLSIE) is disordered.

It belongs to the ubiquitin-conjugating enzyme family. FTS subfamily.

The polypeptide is Protein crossbronx (cbx) (Drosophila erecta (Fruit fly)).